Consider the following 75-residue polypeptide: MKKYYVRCKDSKGENASLVIEALSPEHAKEQAYEVYEVGDIYNVSLGEGKSKNCLDRKYSPYIKNDNGKAITIFS.

This chain is SPbeta prophage-derived uncharacterized protein YorX (yorX), found in Bacillus subtilis (strain 168).